Reading from the N-terminus, the 124-residue chain is CD59 glycoprotein (124 aa).

The N-terminal stretch at 1–24 (MTSRGVHLLLRLLFLLAVFYSSDS) is a signal peptide. The UPAR/Ly6 domain maps to 25 to 101 (SLMCYHCLLP…DLCNGPEDDG (77 aa)). Cystine bridges form between C28–C51, C31–C38, C44–C64, C70–C88, and C89–C94. A glycan (N-linked (GlcNAc...) asparagine) is linked at N37. The GPI-anchor amidated glycine moiety is linked to residue G101. The propeptide at 102–124 (TALTGRTVLLVAPLLAAARNLCL) is removed in mature form.

Interacts with T-cell surface antigen CD2. Post-translationally, N- and O-glycosylated.

The protein resides in the cell membrane. It is found in the secreted. Its function is as follows. Potent inhibitor of the complement membrane attack complex (MAC) action, which protects self-cells from damage during complement activation. Acts by binding to the beta-haipins of C8 (C8A and C8B) components of the assembling MAC, forming an intermolecular beta-sheet that prevents incorporation of the multiple copies of C9 required for complete formation of the osmolytic pore. The chain is CD59 glycoprotein from Oryctolagus cuniculus (Rabbit).